Here is a 791-residue protein sequence, read N- to C-terminus: RAS guanyl-releasing protein 1 (791 aa).

The N-terminal Ras-GEF domain occupies 49-172 (LGKLSKGASL…RLIDTAQINS (124 aa)). Positions 53–106 (SKGASLDDLIQMCIQAFDLDGNMGQNSELLQIMLTMHGFLLPSTELLMKLRTLY) are ras exchanger motif region; required for transforming activity. The region spanning 201-432 (EPQELAEHLT…YELSYAREPR (232 aa)) is the Ras-GEF domain. 2 EF-hand domains span residues 466–501 (HVQR…FPFS) and 502–528 (FCVM…ASSI). Ca(2+)-binding residues include D479, D481, D483, Y485, E490, D506, D508, E510, and E517. Residues 537 to 587 (LHNFQETTYLRPTFCDNCAGFLWGVIKQGYRCKDCGMNCHKQCKELVVFEC) form a Phorbol-ester/DAG-type zinc finger. Residues 683–695 (QVPSPQRSRTPGL) show a composition bias toward polar residues. The tract at residues 683-715 (QVPSPQRSRTPGLTSHLPISPMPSPCPSPVPTR) is disordered. The segment covering 702 to 712 (SPMPSPCPSPV) has biased composition (pro residues). Residues 728-785 (IRKARAELRGGKAGIQELEKEKALLKEENTTLKIQLKDAQRRVETLRAELRKYVLDSD) are a coiled coil.

It belongs to the RASGRP family.

It is found in the cytoplasm. Its subcellular location is the cytosol. It localises to the cell membrane. The protein localises to the golgi apparatus membrane. The protein resides in the endoplasmic reticulum membrane. With respect to regulation, regulated by F-actin polymerization and probably by calcium. In terms of biological role, functions as a diacylglycerol (DAG)-regulated nucleotide exchange factor specifically activating Ras through the exchange of bound GDP for GTP. This Xenopus tropicalis (Western clawed frog) protein is RAS guanyl-releasing protein 1 (rasgrp1).